We begin with the raw amino-acid sequence, 276 residues long: Malectin-B (276 aa).

A signal peptide spans M1 to G26. Residues S27–S253 lie on the Lumenal side of the membrane. Positions 67, 89, 116, 117, and 186 each coordinate a carbohydrate. A disordered region spans residues D202–A249. Residues E216–G226 are compositionally biased toward acidic residues. Over residues S229–A249 the composition is skewed to polar residues. N252 carries an N-linked (GlcNAc...) asparagine glycan. A helical transmembrane segment spans residues S254–C274. Over R275–L276 the chain is Cytoplasmic.

It belongs to the malectin family.

Its subcellular location is the endoplasmic reticulum membrane. Functionally, carbohydrate-binding protein with a strong ligand preference for Glc2-N-glycan. May play a role in the early steps of protein N-glycosylation. Can bind di- or higher oligomers but not monomers of glucose, including maltose, maltotriose, maltotetraose, maltoheptaose, nigerose, kojibose, cellobiose and isomaltose, although based on their subcellular locations, these are unlikely to all be physiological ligands. The sequence is that of Malectin-B from Xenopus laevis (African clawed frog).